The primary structure comprises 608 residues: Albumin 1 (608 aa).

An N-terminal signal peptide occupies residues 1 to 14 (MQWLSVCSLLVLLS). Positions 15-18 (VLSR) are excised as a propeptide. Albumin domains lie at 19–205 (SQAQ…TFQH), 206–398 (AVMK…AGSD), and 402–600 (KITD…KLVS). 18 cysteine pairs are disulfide-bonded: C26-C72, C71-C80, C93-C108, C107-C118, C142-C187, C186-C195, C218-C264, C263-C271, C283-C299, C298-C309, C336-C381, C380-C389, C414-C460, C459-C471, C484-C500, C499-C510, C537-C582, and C581-C590. N501 is a glycosylation site (N-linked (GlcNAc...) asparagine).

Belongs to the ALB/AFP/VDB family. Plasma.

The protein localises to the secreted. Its function is as follows. Binds water, Ca(2+), Na(+), K(+), fatty acids, hormones, bilirubin and drugs. Its main function is the regulation of the colloidal osmotic pressure of blood. The polypeptide is Albumin 1 (alb1) (Salmo salar (Atlantic salmon)).